The following is a 403-amino-acid chain: Ribosomal RNA large subunit methyltransferase I (403 aa).

One can recognise a PUA domain in the interval 9-88 (YPRLVLSKGR…ESIDIAFFTR (80 aa)).

The protein belongs to the methyltransferase superfamily. RlmI family.

Its subcellular location is the cytoplasm. It catalyses the reaction cytidine(1962) in 23S rRNA + S-adenosyl-L-methionine = 5-methylcytidine(1962) in 23S rRNA + S-adenosyl-L-homocysteine + H(+). Its function is as follows. Specifically methylates the cytosine at position 1962 (m5C1962) of 23S rRNA. The chain is Ribosomal RNA large subunit methyltransferase I from Salmonella newport (strain SL254).